A 353-amino-acid polypeptide reads, in one-letter code: E3 ubiquitin-protein ligase TRIM63 (353 aa).

The RING-type zinc finger occupies C23–R79. The tract at residues R74–A218 is interaction with TTN. The B box-type zinc finger occupies G117–L159. Residues C122, H125, C145, and H151 each coordinate Zn(2+). Positions E207–E269 form a coiled coil. In terms of domain architecture, COS spans L267–G325. Over residues T326 to S344 the composition is skewed to acidic residues. The disordered stretch occupies residues T326–Q353.

Homodimer. Homooligomer and heterooligomer. Interacts with SUMO2, titin/TTN and GMEB1. Interacts with TRIM54 and probably with TRIM55 and TNNI3. Forms a ternary complex with RACK1 and PRKCE. Interacts with CKM. Muscle specific. Selectively expressed in heart and skeletal muscle. Also expressed in the iris.

Its subcellular location is the cytoplasm. The protein resides in the nucleus. It is found in the myofibril. The protein localises to the sarcomere. It localises to the m line. Its subcellular location is the z line. It carries out the reaction S-ubiquitinyl-[E2 ubiquitin-conjugating enzyme]-L-cysteine + [acceptor protein]-L-lysine = [E2 ubiquitin-conjugating enzyme]-L-cysteine + N(6)-ubiquitinyl-[acceptor protein]-L-lysine.. It functions in the pathway protein modification; protein ubiquitination. Functionally, E3 ubiquitin ligase. Mediates the ubiquitination and subsequent proteasomal degradation of CKM, GMEB1 and HIBADH. Regulates the proteasomal degradation of muscle proteins under amino acid starvation, where muscle protein is catabolized to provide other organs with amino acids. Inhibits de novo skeletal muscle protein synthesis under amino acid starvation. Regulates proteasomal degradation of cardiac troponin I/TNNI3 and probably of other sarcomeric-associated proteins. May play a role in striated muscle atrophy and hypertrophy by regulating an anti-hypertrophic PKC-mediated signaling pathway. May regulate the organization of myofibrils through TTN in muscle cells. This is E3 ubiquitin-protein ligase TRIM63 (TRIM63) from Homo sapiens (Human).